Here is a 408-residue protein sequence, read N- to C-terminus: CinA-like protein (408 aa).

The protein belongs to the CinA family.

In Anaeromyxobacter sp. (strain K), this protein is CinA-like protein.